A 321-amino-acid chain; its full sequence is MIKLLYPEFWQKRNIIAYLLLPISVIYKFLGYLRASLARPIMLPAKVICVGNCSVGGTGKTQIVMYLAKLLKSRNVSFVIVTKAYGSNLKSATTIHQGHTALEVGDEGVILAKYGAVIATKNIKEIVPLLNELKPDIIIVDDFLQNPYFHKDFTIVSVDSQRLFGNGFLIPAGPLRQYPNKALDAADLIFLVSSHQDKIPNILTPYVNKLINAQIVPSNNIDKTKNYFAFSGIGNPERFFATLKNYGLNITGYKIFPDHYNYLQADLENLYSLAKEHNATLVTTRKDHVKFNDLNNNIVCLDVELSINHPDLLNEKIFKKA.

Residue 54–61 (SVGGTGKT) participates in ATP binding.

Belongs to the LpxK family.

It catalyses the reaction a lipid A disaccharide + ATP = a lipid IVA + ADP + H(+). It functions in the pathway glycolipid biosynthesis; lipid IV(A) biosynthesis; lipid IV(A) from (3R)-3-hydroxytetradecanoyl-[acyl-carrier-protein] and UDP-N-acetyl-alpha-D-glucosamine: step 6/6. Transfers the gamma-phosphate of ATP to the 4'-position of a tetraacyldisaccharide 1-phosphate intermediate (termed DS-1-P) to form tetraacyldisaccharide 1,4'-bis-phosphate (lipid IVA). The chain is Tetraacyldisaccharide 4'-kinase from Rickettsia conorii (strain ATCC VR-613 / Malish 7).